The sequence spans 190 residues: dCTP deaminase, dUMP-forming (190 aa).

DCTP contacts are provided by residues 101–106 (KSSLGR), D119, 127–129 (TLE), Q148, Y162, K170, and Q174. The Proton donor/acceptor role is filled by E129. The segment at 160-190 (HPYGSSRAGSKYQGQRGPTPSRSCQNFIRST) is disordered. Over residues 171 to 190 (YQGQRGPTPSRSCQNFIRST) the composition is skewed to polar residues.

This sequence belongs to the dCTP deaminase family. As to quaternary structure, homotrimer.

The enzyme catalyses dCTP + 2 H2O = dUMP + NH4(+) + diphosphate. It functions in the pathway pyrimidine metabolism; dUMP biosynthesis; dUMP from dCTP: step 1/1. Bifunctional enzyme that catalyzes both the deamination of dCTP to dUTP and the hydrolysis of dUTP to dUMP without releasing the toxic dUTP intermediate. The protein is dCTP deaminase, dUMP-forming of Mycobacterium bovis (strain ATCC BAA-935 / AF2122/97).